A 140-amino-acid chain; its full sequence is Protein SamA (140 aa).

Catalysis depends on for autocatalytic cleavage activity residues Ser61 and Lys98.

This sequence belongs to the peptidase S24 family.

Functionally, involved in UV protection and mutation. This is Protein SamA (samA) from Salmonella typhimurium (strain LT2 / SGSC1412 / ATCC 700720).